A 552-amino-acid polypeptide reads, in one-letter code: MSDIALTVSMLALVAVLGLWIGNWRIYGVGLGIGGVLFGGIIVGHVAHQYQIQLNDDMLHVIQEFGLILFVYTIGIQVGPGFFSSLRVSGLRLNAFALLTVFLGSVVTVMLHKLLNIPLPIILGIFSGAVTNTPSLGAGQQILTDLGSSTALVNQMGTGYAMAYPLGICGILLVMWLMRVLFRVAVDNEAKQFETSNGQHHEQLLTINVSVTNTNLQGLAIQDVPILNRDTIVCSRLKRGDELMVPSPHTLIQLGDYLHLVGAKNDLEQARLVIGNEVETSLSTRGTDLHVERVVVTNEKVLGRKIRELNLKQNYDVVISRLNRAGVELVASNQASLQFGDILNLVGRKTAIDAVADIVGNAQQKLQQVQMLPVFIGIGLGVLLGSVPLMVPGFPVALRLGLAGGPLVVALVLGRIGSIGKLHWFMPPSANLALRELGIVLFLSVVGLKSGGDFVDTLLNGDGVWWIGYGALITIVPLLAVGILARTLGKMNYLTLCGMLAGSMTDPPALAFANGLHPTSGAAALSYATVYPLAMFLRIMSPQLLAVLFLTL.

The next 5 membrane-spanning stretches (helical) occupy residues 4–24 (IALTVSMLALVAVLGLWIGNW), 26–46 (IYGVGLGIGGVLFGGIIVGHV), 65–85 (FGLILFVYTIGIQVGPGFFSS), 90–112 (GLRLNAFALLTVFLGSVVTVMLH), and 158–178 (TGYAMAYPLGICGILLVMWLM). RCK C-terminal domains follow at residues 191–276 (KQFE…VIGN) and 279–361 (ETSL…IVGN). The next 6 helical transmembrane spans lie at 371-391 (MLPVFIGIGLGVLLGSVPLMV), 393-413 (GFPVALRLGLAGGPLVVALVL), 439-459 (IVLFLSVVGLKSGGDFVDTLL), 464-484 (VWWIGYGALITIVPLLAVGIL), 493-513 (YLTLCGMLAGSMTDPPALAFA), and 530-550 (VYPLAMFLRIMSPQLLAVLFL).

The protein belongs to the AAE transporter (TC 2.A.81) family. YidE subfamily.

Its subcellular location is the cell membrane. The polypeptide is Putative transport protein ECA4401 (Pectobacterium atrosepticum (strain SCRI 1043 / ATCC BAA-672) (Erwinia carotovora subsp. atroseptica)).